The chain runs to 239 residues: Glucosamine-6-phosphate deaminase (239 aa).

Asp-62 acts as the Proton acceptor; for enolization step in catalysis. Asn-128 acts as the For ring-opening step in catalysis. The active-site Proton acceptor; for ring-opening step is His-130. The active-site For ring-opening step is the Glu-135.

It belongs to the glucosamine/galactosamine-6-phosphate isomerase family. NagB subfamily.

It carries out the reaction alpha-D-glucosamine 6-phosphate + H2O = beta-D-fructose 6-phosphate + NH4(+). It participates in amino-sugar metabolism; N-acetylneuraminate degradation; D-fructose 6-phosphate from N-acetylneuraminate: step 5/5. Functionally, catalyzes the reversible isomerization-deamination of glucosamine 6-phosphate (GlcN6P) to form fructose 6-phosphate (Fru6P) and ammonium ion. This Lactobacillus johnsonii (strain CNCM I-12250 / La1 / NCC 533) protein is Glucosamine-6-phosphate deaminase.